The sequence spans 81 residues: Putative defensin-like protein 148 (81 aa).

The N-terminal stretch at 1–24 (MIKSFQLSFTVLIVFTVLILGVVG) is a signal peptide. 4 disulfide bridges follow: Cys-34-Cys-80, Cys-43-Cys-63, Cys-48-Cys-74, and Cys-52-Cys-76.

It belongs to the DEFL family.

It localises to the secreted. The sequence is that of Putative defensin-like protein 148 (LCR4) from Arabidopsis thaliana (Mouse-ear cress).